We begin with the raw amino-acid sequence, 343 residues long: S-adenosylmethionine:tRNA ribosyltransferase-isomerase (343 aa).

The protein belongs to the QueA family. As to quaternary structure, monomer.

It localises to the cytoplasm. It carries out the reaction 7-aminomethyl-7-carbaguanosine(34) in tRNA + S-adenosyl-L-methionine = epoxyqueuosine(34) in tRNA + adenine + L-methionine + 2 H(+). It functions in the pathway tRNA modification; tRNA-queuosine biosynthesis. Its function is as follows. Transfers and isomerizes the ribose moiety from AdoMet to the 7-aminomethyl group of 7-deazaguanine (preQ1-tRNA) to give epoxyqueuosine (oQ-tRNA). The sequence is that of S-adenosylmethionine:tRNA ribosyltransferase-isomerase from Dehalococcoides mccartyi (strain CBDB1).